We begin with the raw amino-acid sequence, 430 residues long: Histidine--tRNA ligase (430 aa).

Belongs to the class-II aminoacyl-tRNA synthetase family. In terms of assembly, homodimer.

Its subcellular location is the cytoplasm. It carries out the reaction tRNA(His) + L-histidine + ATP = L-histidyl-tRNA(His) + AMP + diphosphate + H(+). This chain is Histidine--tRNA ligase, found in Anaplasma marginale (strain St. Maries).